A 626-amino-acid polypeptide reads, in one-letter code: Chaperone protein HtpG (626 aa).

Residues 1–341 (METKQFKAES…SEDLSLNISR (341 aa)) form an a; substrate-binding region. Residues 342–552 (EILQHDRQLK…EGELSIEMEK (211 aa)) are b. A disordered region spans residues 490 to 509 (DLGIEGEEKENTSNSDDKEN). The span at 498 to 509 (KENTSNSDDKEN) shows a compositional bias: basic and acidic residues. The segment at 553–626 (VLNAMPNNQN…FTNNICKIMK (74 aa)) is c.

The protein belongs to the heat shock protein 90 family. As to quaternary structure, homodimer.

It localises to the cytoplasm. Molecular chaperone. Has ATPase activity. In Clostridium botulinum (strain ATCC 19397 / Type A), this protein is Chaperone protein HtpG.